Reading from the N-terminus, the 272-residue chain is NH(3)-dependent NAD(+) synthetase (272 aa).

45–52 (GISGGQDS) is a binding site for ATP. Aspartate 51 is a binding site for Mg(2+). Deamido-NAD(+) is bound at residue arginine 138. Position 158 (threonine 158) interacts with ATP. Residue glutamate 163 coordinates Mg(2+). The deamido-NAD(+) site is built by lysine 171 and aspartate 178. ATP is bound by residues lysine 187 and threonine 209. 258–259 (HK) contacts deamido-NAD(+).

It belongs to the NAD synthetase family. As to quaternary structure, homodimer.

It carries out the reaction deamido-NAD(+) + NH4(+) + ATP = AMP + diphosphate + NAD(+) + H(+). The protein operates within cofactor biosynthesis; NAD(+) biosynthesis; NAD(+) from deamido-NAD(+) (ammonia route): step 1/1. Catalyzes the ATP-dependent amidation of deamido-NAD to form NAD. Uses ammonia as a nitrogen source. This chain is NH(3)-dependent NAD(+) synthetase, found in Bacillus cereus (strain G9842).